The primary structure comprises 731 residues: Alpha-1,4-glucan:maltose-1-phosphate maltosyltransferase (731 aa).

The segment covering 1–10 (MEAQHNETEA) has biased composition (basic and acidic residues). The segment at 1–31 (MEAQHNETEAAGKPAAKKTTRTRKPRASKQA) is disordered. Positions 15-27 (AAKKTTRTRKPRA) are enriched in basic residues. Residues Lys-321, Gln-381, and Asp-416 each contribute to the alpha-maltose 1-phosphate site. The active-site Nucleophile is Asp-451. Asn-452 is a binding site for alpha-maltose 1-phosphate. Residue Glu-480 is the Proton donor of the active site. 590 to 591 (KF) provides a ligand contact to alpha-maltose 1-phosphate.

The protein belongs to the glycosyl hydrolase 13 family. GlgE subfamily. As to quaternary structure, homodimer.

It carries out the reaction alpha-maltose 1-phosphate + [(1-&gt;4)-alpha-D-glucosyl](n) = [(1-&gt;4)-alpha-D-glucosyl](n+2) + phosphate. In terms of biological role, maltosyltransferase that uses maltose 1-phosphate (M1P) as the sugar donor to elongate linear or branched alpha-(1-&gt;4)-glucans. Is involved in a branched alpha-glucan biosynthetic pathway from trehalose, together with TreS, Mak and GlgB. This chain is Alpha-1,4-glucan:maltose-1-phosphate maltosyltransferase, found in Bifidobacterium animalis subsp. lactis (strain Bl-04 / DGCC2908 / RB 4825 / SD5219).